Consider the following 290-residue polypeptide: tRNA-cytidine(32) 2-sulfurtransferase (290 aa).

The PP-loop motif motif lies at 36-41 (SGGKDS). [4Fe-4S] cluster contacts are provided by Cys111, Cys114, and Cys202. Positions 259-290 (DPWLDAEDEEAEDCGEPAGDGVVSLGGARGGR) are disordered. A compositionally biased stretch (acidic residues) spans 262 to 273 (LDAEDEEAEDCG).

The protein belongs to the TtcA family. Homodimer. It depends on Mg(2+) as a cofactor. Requires [4Fe-4S] cluster as cofactor.

It localises to the cytoplasm. It catalyses the reaction cytidine(32) in tRNA + S-sulfanyl-L-cysteinyl-[cysteine desulfurase] + AH2 + ATP = 2-thiocytidine(32) in tRNA + L-cysteinyl-[cysteine desulfurase] + A + AMP + diphosphate + H(+). It functions in the pathway tRNA modification. Functionally, catalyzes the ATP-dependent 2-thiolation of cytidine in position 32 of tRNA, to form 2-thiocytidine (s(2)C32). The sulfur atoms are provided by the cysteine/cysteine desulfurase (IscS) system. The chain is tRNA-cytidine(32) 2-sulfurtransferase from Anaeromyxobacter dehalogenans (strain 2CP-C).